Here is a 283-residue protein sequence, read N- to C-terminus: Nucleoid occlusion protein (283 aa).

Positions glutamate 148–leucine 167 form a DNA-binding region, H-T-H motif.

The protein belongs to the ParB family.

The protein resides in the cytoplasm. It is found in the nucleoid. Its function is as follows. Effects nucleoid occlusion by binding relatively nonspecifically to DNA and preventing the assembly of the division machinery in the vicinity of the nucleoid, especially under conditions that disturb the cell cycle. It helps to coordinate cell division and chromosome segregation by preventing the formation of the Z ring through the nucleoid, which would cause chromosome breakage. This is Nucleoid occlusion protein from Bacillus licheniformis (strain ATCC 14580 / DSM 13 / JCM 2505 / CCUG 7422 / NBRC 12200 / NCIMB 9375 / NCTC 10341 / NRRL NRS-1264 / Gibson 46).